Here is a 765-residue protein sequence, read N- to C-terminus: E3 ubiquitin-protein ligase SlrP (765 aa).

The tract at residues 1–453 (MFNITNIQST…YQGPRVLFAM (453 aa)) is interaction with target proteins. LRR repeat units lie at residues 200–219 (QITT…ENLQ), 221–242 (NIKT…LPDT), 243–262 (IQEM…RLPS), 263–284 (ALQS…LPEE), 285–305 (LRYL…LPSE), 306–325 (ITHL…TLPP), 326–346 (GLKT…SLPP), 347–368 (ELQV…LPPT), 369–389 (ITTL…LPAA), and 390–410 (LQIM…LPHF). The linker stretch occupies residues 454–461 (GDFSIVRV). Residues 462–765 (TRPLHQAVQG…VSSLMSAYWR (304 aa)) form an E3 ubiquitin-protein ligase catalytic domain region. The region spanning 464-758 (PLHQAVQGWL…NILLKKEVSS (295 aa)) is the NEL domain. The active-site Glycyl thioester intermediate is Cys546.

It belongs to the LRR-containing bacterial E3 ligase family. In terms of assembly, interacts with host TXN. Post-translationally, ubiquitinated in the presence of host E1 ubiquitin-activating enzyme, E2 ubiquitin-conjugating enzyme and ubiquitin.

The protein localises to the secreted. Its subcellular location is the host cytoplasm. The catalysed reaction is S-ubiquitinyl-[E2 ubiquitin-conjugating enzyme]-L-cysteine + [acceptor protein]-L-lysine = [E2 ubiquitin-conjugating enzyme]-L-cysteine + N(6)-ubiquitinyl-[acceptor protein]-L-lysine.. Effector proteins function to alter host cell physiology and promote bacterial survival in host tissues. This protein is an E3 ubiquitin ligase that interferes with host's ubiquitination pathway. Can ubiquitinate both ubiquitin and host TXN (thioredoxin). Leads to significant decrease of thioredoxin activity and increase of host cell death. This Salmonella typhimurium (strain 14028s / SGSC 2262) protein is E3 ubiquitin-protein ligase SlrP (slrP).